We begin with the raw amino-acid sequence, 377 residues long: Nitric oxide reductase FlRd-NAD(+) reductase (377 aa).

This sequence belongs to the FAD-dependent oxidoreductase family. It depends on FAD as a cofactor.

The protein resides in the cytoplasm. It carries out the reaction 2 reduced [nitric oxide reductase rubredoxin domain] + NAD(+) + H(+) = 2 oxidized [nitric oxide reductase rubredoxin domain] + NADH. The protein operates within nitrogen metabolism; nitric oxide reduction. Its function is as follows. One of at least two accessory proteins for anaerobic nitric oxide (NO) reductase. Reduces the rubredoxin moiety of NO reductase. The polypeptide is Nitric oxide reductase FlRd-NAD(+) reductase (Escherichia coli O17:K52:H18 (strain UMN026 / ExPEC)).